The sequence spans 712 residues: Saccharolysin (712 aa).

S73 bears the Phosphoserine mark. Position 501 (H501) interacts with Zn(2+). E502 is a catalytic residue. Residues H505 and H508 each contribute to the Zn(2+) site.

It belongs to the peptidase M3 family. Zn(2+) serves as cofactor.

It localises to the cytoplasm. It carries out the reaction Cleavage of Pro-|-Phe and Ala-|-Ala bonds.. Functionally, could be involved in late stage of protein degradation. This Saccharomyces cerevisiae (strain ATCC 204508 / S288c) (Baker's yeast) protein is Saccharolysin (PRD1).